Reading from the N-terminus, the 96-residue chain is Large ribosomal subunit protein uL23 (96 aa).

This sequence belongs to the universal ribosomal protein uL23 family. In terms of assembly, part of the 50S ribosomal subunit. Contacts protein L29, and trigger factor when it is bound to the ribosome.

In terms of biological role, one of the early assembly proteins it binds 23S rRNA. One of the proteins that surrounds the polypeptide exit tunnel on the outside of the ribosome. Forms the main docking site for trigger factor binding to the ribosome. The sequence is that of Large ribosomal subunit protein uL23 from Nitratidesulfovibrio vulgaris (strain DSM 19637 / Miyazaki F) (Desulfovibrio vulgaris).